The following is a 368-amino-acid chain: Propane 2-monooxygenase, hydroxylase component small subunit (368 aa).

Positions 1–33 (MSAPAQPRERSFPSIEFTDAEADAREFPSSRSR) are disordered.

This sequence belongs to the TmoE/XamoE family. The propane 2-monooxygenase multicomponent enzyme system is composed of an electron transfer component and a monooxygenase component interacting with the effector protein PrmD. The electron transfer component is composed of a reductase (PrmB), and the monooxygenase component is formed by a large subunit (PrmA) and a small subunit (PrmC). Probably requires the presence of the chaperonin-like protein PrmG to ensure a productive folding, resulting of a soluble PrmC, which leads to the active form of PrmABCD.

The catalysed reaction is propane + NADH + O2 + H(+) = propan-2-ol + NAD(+) + H2O. It carries out the reaction phenol + NADH + O2 + H(+) = hydroquinone + NAD(+) + H2O. Its function is as follows. Component of the propane 2-monooxygenase multicomponent enzyme system which is involved in the degradation of propane via the O2-dependent hydroxylation of propane. Under acetone induction, also able to catalyze the oxidation of phenol to yield hydroquinone. This Gordonia sp. (strain TY-5) protein is Propane 2-monooxygenase, hydroxylase component small subunit.